The sequence spans 249 residues: Tetraspanin-18 (249 aa).

The Cytoplasmic segment spans residues methionine 1 to methionine 13. A helical transmembrane segment spans residues phenylalanine 14–valine 34. Residues methionine 35–proline 49 are Extracellular-facing. Residues leucine 50 to phenylalanine 70 traverse the membrane as a helical segment. Residues leucine 71 to leucine 83 lie on the Cytoplasmic side of the membrane. Residues leucine 84–leucine 104 traverse the membrane as a helical segment. Over alanine 105 to glycine 223 the chain is Extracellular. N-linked (GlcNAc...) asparagine glycosylation is found at asparagine 111 and asparagine 129. Residues alanine 224 to phenylalanine 244 traverse the membrane as a helical segment. At arginine 245–glutamine 249 the chain is on the cytoplasmic side.

This sequence belongs to the tetraspanin (TM4SF) family. Interacts with ORAI1; this interaction regulates ORAI1 exit from the endoplasmic (ER), and/or Golgi, and trafficking to the cell surface.

It is found in the membrane. Functionally, plays a role in the cell surface localization of ORAI1 and may participate in the regulation of Ca(2+) signaling and the VWF release in response to inflammatory stimuli. This chain is Tetraspanin-18, found in Bos taurus (Bovine).